The sequence spans 385 residues: Probable tRNA sulfurtransferase (385 aa).

One can recognise a THUMP domain in the interval 57–160; that stretch reads DGVIERVKKV…RGNAYVFTDK (104 aa). Residues 180–181, 205–206, R262, G284, and Q293 each bind ATP; these read ML and YY.

It belongs to the ThiI family.

It is found in the cytoplasm. The catalysed reaction is [ThiI sulfur-carrier protein]-S-sulfanyl-L-cysteine + a uridine in tRNA + 2 reduced [2Fe-2S]-[ferredoxin] + ATP + H(+) = [ThiI sulfur-carrier protein]-L-cysteine + a 4-thiouridine in tRNA + 2 oxidized [2Fe-2S]-[ferredoxin] + AMP + diphosphate. It catalyses the reaction [ThiS sulfur-carrier protein]-C-terminal Gly-Gly-AMP + S-sulfanyl-L-cysteinyl-[cysteine desulfurase] + AH2 = [ThiS sulfur-carrier protein]-C-terminal-Gly-aminoethanethioate + L-cysteinyl-[cysteine desulfurase] + A + AMP + 2 H(+). The protein operates within cofactor biosynthesis; thiamine diphosphate biosynthesis. Its function is as follows. Catalyzes the ATP-dependent transfer of a sulfur to tRNA to produce 4-thiouridine in position 8 of tRNAs, which functions as a near-UV photosensor. Also catalyzes the transfer of sulfur to the sulfur carrier protein ThiS, forming ThiS-thiocarboxylate. This is a step in the synthesis of thiazole, in the thiamine biosynthesis pathway. The sulfur is donated as persulfide by IscS. The sequence is that of Probable tRNA sulfurtransferase from Clostridium perfringens (strain ATCC 13124 / DSM 756 / JCM 1290 / NCIMB 6125 / NCTC 8237 / Type A).